The primary structure comprises 325 residues: GMP reductase (325 aa).

The Thioimidate intermediate role is filled by Cys173. 202-225 (IIADGGIRSHGDIAKSVRFGATMV) serves as a coordination point for NADP(+).

This sequence belongs to the IMPDH/GMPR family. GuaC type 2 subfamily.

It catalyses the reaction IMP + NH4(+) + NADP(+) = GMP + NADPH + 2 H(+). Functionally, catalyzes the irreversible NADPH-dependent deamination of GMP to IMP. It functions in the conversion of nucleobase, nucleoside and nucleotide derivatives of G to A nucleotides, and in maintaining the intracellular balance of A and G nucleotides. This Delftia acidovorans (strain DSM 14801 / SPH-1) protein is GMP reductase.